Consider the following 293-residue polypeptide: Large ribosomal subunit protein uL18 (293 aa).

Positions 247-263 are enriched in basic and acidic residues; sequence IRANPAHEKKQPRDGLV. Residues 247 to 283 are disordered; sequence IRANPAHEKKQPRDGLVKKRWNRAKMSLKQKRDRVKQ. Basic residues predominate over residues 264–283; it reads KKRWNRAKMSLKQKRDRVKQ.

It belongs to the universal ribosomal protein uL18 family. As to quaternary structure, component of the large ribosomal subunit (LSU).

The protein resides in the cytoplasm. It localises to the nucleus. Functionally, component of the ribosome, a large ribonucleoprotein complex responsible for the synthesis of proteins in the cell. The small ribosomal subunit (SSU) binds messenger RNAs (mRNAs) and translates the encoded message by selecting cognate aminoacyl-transfer RNA (tRNA) molecules. The large subunit (LSU) contains the ribosomal catalytic site termed the peptidyl transferase center (PTC), which catalyzes the formation of peptide bonds, thereby polymerizing the amino acids delivered by tRNAs into a polypeptide chain. The nascent polypeptides leave the ribosome through a tunnel in the LSU and interact with protein factors that function in enzymatic processing, targeting, and the membrane insertion of nascent chains at the exit of the ribosomal tunnel. The chain is Large ribosomal subunit protein uL18 (RPL5) from Suberites domuncula (Sponge).